The sequence spans 174 residues: Ubiquinone biosynthesis accessory factor UbiT (174 aa).

The 89-residue stretch at 45-133 (LDDGELEFLE…LGLYVKNLMD (89 aa)) folds into the SCP2 domain.

The protein belongs to the UbiT family.

Its pathway is cofactor biosynthesis; ubiquinone biosynthesis. Its function is as follows. Required for O(2)-independent ubiquinone (coenzyme Q) biosynthesis. Likely functions as an accessory factor. This chain is Ubiquinone biosynthesis accessory factor UbiT, found in Escherichia coli O157:H7.